We begin with the raw amino-acid sequence, 354 residues long: DNA integrity scanning protein DisA (354 aa).

Positions 6 to 144 constitute a DAC domain; that stretch reads GIGIKNVLKI…GDIKYVLRES (139 aa). Residues Gly73, Leu91, and 104-108 each bind ATP; that span reads TRHRT.

This sequence belongs to the DisA family. In terms of assembly, homooctamer. The cofactor is Mg(2+).

The enzyme catalyses 2 ATP = 3',3'-c-di-AMP + 2 diphosphate. In terms of biological role, participates in a DNA-damage check-point that is active prior to asymmetric division when DNA is damaged. DisA forms globular foci that rapidly scan along the chromosomes during sporulation, searching for lesions. When a lesion is present, DisA pauses at the lesion site. This triggers a cellular response that culminates in a temporary block in sporulation initiation. Functionally, also has diadenylate cyclase activity, catalyzing the condensation of 2 ATP molecules into cyclic di-AMP (c-di-AMP). c-di-AMP acts as a signaling molecule that couples DNA integrity with progression of sporulation. The rise in c-di-AMP level generated by DisA while scanning the chromosome, operates as a positive signal that advances sporulation; upon encountering a lesion, the DisA focus arrests at the damaged site and halts c-di-AMP synthesis. The sequence is that of DNA integrity scanning protein DisA from Clostridium beijerinckii (strain ATCC 51743 / NCIMB 8052) (Clostridium acetobutylicum).